Reading from the N-terminus, the 215-residue chain is Beta-crystallin A3 (215 aa).

Residues 1 to 30 (MGEAAVPPELDTFPAAKMAQTNPLPVPMGP) form an N-terminal arm region. Beta/gamma crystallin 'Greek key' domains are found at residues 31–70 (WKITVYDQENFQGKRMEFTSACPNIMECGFDNIRSLKVEC) and 71–117 (GAWV…RPVC). The segment at 118-123 (SANHKE) is connecting peptide. Beta/gamma crystallin 'Greek key' domains lie at 124-165 (SKIT…KIPC) and 166-214 (GAWV…RRIQ).

The protein belongs to the beta/gamma-crystallin family. As to quaternary structure, homo/heterodimer, or complexes of higher-order. The structure of beta-crystallin oligomers seems to be stabilized through interactions between the N-terminal arms.

Functionally, crystallins are the dominant structural components of the vertebrate eye lens. The polypeptide is Beta-crystallin A3 (CRYBA1) (Gallus gallus (Chicken)).